Consider the following 301-residue polypeptide: MYSTKCIQKQAHKEGIWCCTWGENRNRNKQYIITGSLDNGLIAWEWTNSQLKCLYQFEGHRLGVISVDINSTGTLAASSSLDSQILLWDLETGRLTKTYDGDPADTWTIAFSPDSRFLATGSHTGCVNMINVQTAQKEGSIQLEGKFVYXLAYISDGSKLAAGTINGLVSICDLETGSVQFLDGHATPVRSVSFSPDGRLLASASDDKQIKVFDVRDGRLVIPSLNGHKGWVVSVDFASDNRHLVTASTDCSVRIWDLASKEEKHCFNTHEDQVWCARYSPQGNNIISVGDDRSIMIYQCA.

WD repeat units follow at residues 11 to 54 (AHKE…LKCL), 59 to 98 (GHRL…LTKT), 101 to 140 (GDPA…KEGS), 143 to 182 (LEGK…VQFL), 184 to 223 (GHAT…LVIP), 227 to 266 (GHKG…EKHC), and 269 to 300 (THED…IYQC).

This chain is WD repeat-containing protein SL1-17, found in Schistosoma mansoni (Blood fluke).